The chain runs to 209 residues: Small ribosomal subunit protein uS5 (209 aa).

An S5 DRBM domain is found at 48-111 (LEDEVLDINM…DAAKLNITYI (64 aa)).

Belongs to the universal ribosomal protein uS5 family. Part of the 30S ribosomal subunit. Contacts protein S4.

With S4 and S12 plays an important role in translational accuracy. This is Small ribosomal subunit protein uS5 from Methanosarcina mazei (strain ATCC BAA-159 / DSM 3647 / Goe1 / Go1 / JCM 11833 / OCM 88) (Methanosarcina frisia).